Consider the following 98-residue polypeptide: Transcription elongation factor A protein-like 7 (98 aa).

Residues 1-24 (MQRSCNEKEGKPKCSEPKREEEHP) show a composition bias toward basic and acidic residues. Residues 1-31 (MQRSCNEKEGKPKCSEPKREEEHPYGAFEGQ) are disordered. Residues 59 to 89 (GEEMTGEEEEMERCLEEIRSLRKKFRALHSN) adopt a coiled-coil conformation.

The protein belongs to the TFS-II family. TFA subfamily.

The protein resides in the nucleus. In terms of biological role, plays a role in the negative regulation of NF-kappa-B signaling at the basal level by modulating transcriptional activity of NF-kappa-B on its target gene promoters. Associates with cyclin D1 promoter containing Myc E-box sequence and transcriptionally represses cyclin D1 expression. Regulates telomerase reverse transcriptase expression and telomerase activity in both ALT (alternative lengthening of telomeres)and telomerase-positive cell lines. The chain is Transcription elongation factor A protein-like 7 (Tceal7) from Rattus norvegicus (Rat).